We begin with the raw amino-acid sequence, 440 residues long: Polyprenol-phosphate-mannose-dependent alpha-(1-2)-phosphatidylinositol mannoside mannosyltransferase (440 aa).

11 helical membrane passes run leucine 15–valine 35, leucine 87–isoleucine 107, alanine 109–tryptophan 129, alanine 144–isoleucine 161, asparagine 164–proline 184, leucine 193–leucine 213, threonine 224–valine 244, proline 281–alanine 301, alanine 316–tryptophan 336, valine 360–leucine 380, and leucine 395–serine 415. A disordered region spans residues threonine 419–glycine 440.

The protein belongs to the glycosyltransferase 87 family.

It localises to the cell membrane. The protein operates within phospholipid metabolism; phosphatidylinositol metabolism. Functionally, responsible for the addition of alpha-(1-2) mannose branches to the linear mannan core on the biosynthetic pathway to mature Lipoarabinomannan (LAM). This Mycolicibacterium smegmatis (strain ATCC 700084 / mc(2)155) (Mycobacterium smegmatis) protein is Polyprenol-phosphate-mannose-dependent alpha-(1-2)-phosphatidylinositol mannoside mannosyltransferase.